We begin with the raw amino-acid sequence, 680 residues long: DNA-directed RNA polymerase subunit beta' (680 aa).

Zn(2+) contacts are provided by Cys-69, Cys-71, Cys-87, and Cys-90. Residues Asp-489, Asp-491, and Asp-493 each coordinate Mg(2+).

It belongs to the RNA polymerase beta' chain family. RpoC1 subfamily. In terms of assembly, in plastids the minimal PEP RNA polymerase catalytic core is composed of four subunits: alpha, beta, beta', and beta''. When a (nuclear-encoded) sigma factor is associated with the core the holoenzyme is formed, which can initiate transcription. Requires Mg(2+) as cofactor. Zn(2+) serves as cofactor.

The protein resides in the plastid. Its subcellular location is the chloroplast. It catalyses the reaction RNA(n) + a ribonucleoside 5'-triphosphate = RNA(n+1) + diphosphate. DNA-dependent RNA polymerase catalyzes the transcription of DNA into RNA using the four ribonucleoside triphosphates as substrates. This chain is DNA-directed RNA polymerase subunit beta', found in Manihot esculenta (Cassava).